Here is a 229-residue protein sequence, read N- to C-terminus: Orotate phosphoribosyltransferase (229 aa).

5-phospho-alpha-D-ribose 1-diphosphate contacts are provided by residues Arg-107, Lys-108, Lys-111, His-113, and 133 to 141 (EDLTTAGGS). Thr-137 lines the orotate pocket.

Belongs to the purine/pyrimidine phosphoribosyltransferase family. PyrE subfamily. As to quaternary structure, homodimer. Requires Mg(2+) as cofactor.

It catalyses the reaction orotidine 5'-phosphate + diphosphate = orotate + 5-phospho-alpha-D-ribose 1-diphosphate. It participates in pyrimidine metabolism; UMP biosynthesis via de novo pathway; UMP from orotate: step 1/2. Catalyzes the transfer of a ribosyl phosphate group from 5-phosphoribose 1-diphosphate to orotate, leading to the formation of orotidine monophosphate (OMP). The polypeptide is Orotate phosphoribosyltransferase (Rhizobium johnstonii (strain DSM 114642 / LMG 32736 / 3841) (Rhizobium leguminosarum bv. viciae)).